The primary structure comprises 395 residues: NADH-quinone oxidoreductase subunit D (395 aa).

Belongs to the complex I 49 kDa subunit family. In terms of assembly, NDH-1 is composed of 14 different subunits. Subunits NuoB, C, D, E, F, and G constitute the peripheral sector of the complex.

The protein localises to the cell inner membrane. It carries out the reaction a quinone + NADH + 5 H(+)(in) = a quinol + NAD(+) + 4 H(+)(out). NDH-1 shuttles electrons from NADH, via FMN and iron-sulfur (Fe-S) centers, to quinones in the respiratory chain. The immediate electron acceptor for the enzyme in this species is believed to be a menaquinone. Couples the redox reaction to proton translocation (for every two electrons transferred, four hydrogen ions are translocated across the cytoplasmic membrane), and thus conserves the redox energy in a proton gradient. This is NADH-quinone oxidoreductase subunit D from Chlorobium luteolum (strain DSM 273 / BCRC 81028 / 2530) (Pelodictyon luteolum).